A 238-amino-acid polypeptide reads, in one-letter code: Large ribosomal subunit protein uL1 (238 aa).

It belongs to the universal ribosomal protein uL1 family. In terms of assembly, part of the 50S ribosomal subunit.

In terms of biological role, binds directly to 23S rRNA. The L1 stalk is quite mobile in the ribosome, and is involved in E site tRNA release. Its function is as follows. Protein L1 is also a translational repressor protein, it controls the translation of the L11 operon by binding to its mRNA. This is Large ribosomal subunit protein uL1 from Trichodesmium erythraeum (strain IMS101).